Consider the following 541-residue polypeptide: DEAD-box ATP-dependent RNA helicase 57 (541 aa).

The span at 43–52 (VEEEEDTEQP) shows a compositional bias: acidic residues. The disordered stretch occupies residues 43 to 72 (VEEEEDTEQPEAEKVIVSSKKRKRRSSNSV). The Q motif signature appears at 141–169 (ELSSRYGCEGYILRNLAELGFKEPTPIQR). The region spanning 172 to 342 (IPILLSGREC…RSIMHDAVRV (171 aa)) is the Helicase ATP-binding domain. 185-192 (APTGSGKT) serves as a coordination point for ATP. The DEAD box motif lies at 289–292 (DESD). In terms of domain architecture, Helicase C-terminal spans 370–514 (ALRQSFAESL…EVPSWIMSLK (145 aa)). Positions 517 to 541 (KWRKHRPRRDSISTKPKADKNDTDE) are disordered. The span at 525 to 541 (RDSISTKPKADKNDTDE) shows a compositional bias: basic and acidic residues.

It belongs to the DEAD box helicase family. DDX52/ROK1 subfamily.

It catalyses the reaction ATP + H2O = ADP + phosphate + H(+). This chain is DEAD-box ATP-dependent RNA helicase 57 (RH57), found in Arabidopsis thaliana (Mouse-ear cress).